A 467-amino-acid chain; its full sequence is 6-phosphogluconate dehydrogenase, decarboxylating (467 aa).

Residues 9–14 (GLGVMG), 32–34 (NYT), 73–75 (VTA), and Asn101 each bind NADP(+). Substrate contacts are provided by residues Asn101 and 127–129 (SGG). Residue Lys181 is the Proton acceptor of the active site. 184–185 (HN) is a substrate binding site. The Proton donor role is filled by Glu188. 4 residues coordinate substrate: Tyr189, Lys259, Arg286, and His451.

This sequence belongs to the 6-phosphogluconate dehydrogenase family. As to quaternary structure, homodimer.

It carries out the reaction 6-phospho-D-gluconate + NADP(+) = D-ribulose 5-phosphate + CO2 + NADPH. Its pathway is carbohydrate degradation; pentose phosphate pathway; D-ribulose 5-phosphate from D-glucose 6-phosphate (oxidative stage): step 3/3. Functionally, catalyzes the oxidative decarboxylation of 6-phosphogluconate to ribulose 5-phosphate and CO(2), with concomitant reduction of NADP to NADPH. The sequence is that of 6-phosphogluconate dehydrogenase, decarboxylating (gntZ) from Bacillus licheniformis.